We begin with the raw amino-acid sequence, 952 residues long: Isoleucine--tRNA ligase (952 aa).

Positions 58 to 68 match the 'HIGH' region motif; the sequence is PYANGDIHIGH. Glu-576 is an L-isoleucyl-5'-AMP binding site. The 'KMSKS' region motif lies at 617-621; it reads KMSKS. ATP is bound at residue Lys-620. Residues Cys-915, Cys-918, Cys-935, and Cys-938 each contribute to the Zn(2+) site.

Belongs to the class-I aminoacyl-tRNA synthetase family. IleS type 1 subfamily. As to quaternary structure, monomer. The cofactor is Zn(2+).

It is found in the cytoplasm. The enzyme catalyses tRNA(Ile) + L-isoleucine + ATP = L-isoleucyl-tRNA(Ile) + AMP + diphosphate. Functionally, catalyzes the attachment of isoleucine to tRNA(Ile). As IleRS can inadvertently accommodate and process structurally similar amino acids such as valine, to avoid such errors it has two additional distinct tRNA(Ile)-dependent editing activities. One activity is designated as 'pretransfer' editing and involves the hydrolysis of activated Val-AMP. The other activity is designated 'posttransfer' editing and involves deacylation of mischarged Val-tRNA(Ile). The sequence is that of Isoleucine--tRNA ligase from Aliivibrio fischeri (strain MJ11) (Vibrio fischeri).